Consider the following 435-residue polypeptide: 5-methylthioadenosine/S-adenosylhomocysteine deaminase (435 aa).

2 residues coordinate Zn(2+): H65 and H67. Residues E94, R150, and H189 each coordinate substrate. H216 is a binding site for Zn(2+). Positions 219 and 304 each coordinate substrate. Position 304 (D304) interacts with Zn(2+).

The protein belongs to the metallo-dependent hydrolases superfamily. MTA/SAH deaminase family. Requires Zn(2+) as cofactor.

The enzyme catalyses S-adenosyl-L-homocysteine + H2O + H(+) = S-inosyl-L-homocysteine + NH4(+). It catalyses the reaction S-methyl-5'-thioadenosine + H2O + H(+) = S-methyl-5'-thioinosine + NH4(+). Its function is as follows. Catalyzes the deamination of 5-methylthioadenosine and S-adenosyl-L-homocysteine into 5-methylthioinosine and S-inosyl-L-homocysteine, respectively. Is also able to deaminate adenosine. This is 5-methylthioadenosine/S-adenosylhomocysteine deaminase from Bacillus thuringiensis (strain Al Hakam).